Consider the following 533-residue polypeptide: Protein mono-ADP-ribosyltransferase PARP3 (533 aa).

The disordered stretch occupies residues 1-30; sequence MAPKPKPWVQTEGPEKKKGRQAGREEDPFR. At Lys-6 the chain carries N6-(ADP-ribosyl)lysine. An ADP-ribosyl glutamic acid mark is found at Glu-12, Glu-15, Glu-26, and Glu-34. A Nuclear localization signal motif is present at residues 14-20; sequence PEKKKGR. Lys-37 is subject to N6-(ADP-ribosyl)lysine. The WGR domain maps to 59 to 150; it reads GTQVYEDYNC…DHFVSHPGKY (92 aa). An ADP-ribosyl aspartic acid modification is found at Asp-141. Glu-163 is subject to ADP-ribosyl glutamic acid. The region spanning 182 to 300 is the PARP alpha-helical domain; it reads PCSLDPATQK…DIELAQALQA (119 aa). An ADP-ribosyl aspartic acid modification is found at Asp-210. Glu-231, Glu-309, Glu-310, Glu-344, and Glu-449 each carry ADP-ribosyl glutamic acid. The 221-residue stretch at 313-533 folds into the PARP catalytic domain; that stretch reads HPLDRDYQLL…RLRYLLEVHL (221 aa). The segment at 454–482 is disordered; that stretch reads TDNPSLKSPPPGFDSVIARGHTEPDPTQD.

The protein belongs to the ARTD/PARP family. As to quaternary structure, interacts with PARP1; leading to activate PARP1 in absence of DNA. Interacts with PRKDC. Interacts with XRCC5/Ku80; the interaction is dependent on nucleic acids. Interacts with XRCC6/Ku70; the interaction is dependent on nucleic acids. Interacts with EZH2, HDAC1, HDAC2, SUZ12, YY1, LRIG3 and LIG4. In terms of processing, auto-mono-ADP-ribosylated. In terms of tissue distribution, widely expressed; the highest levels are in the kidney, skeletal muscle, liver, heart and spleen; also detected in pancreas, lung, placenta, brain, leukocytes, colon, small intestine, ovary, testis, prostate and thymus.

It localises to the nucleus. The protein localises to the chromosome. Its subcellular location is the cytoplasm. It is found in the cytoskeleton. The protein resides in the microtubule organizing center. It localises to the centrosome. The protein localises to the centriole. The enzyme catalyses L-aspartyl-[protein] + NAD(+) = 4-O-(ADP-D-ribosyl)-L-aspartyl-[protein] + nicotinamide. The catalysed reaction is L-glutamyl-[protein] + NAD(+) = 5-O-(ADP-D-ribosyl)-L-glutamyl-[protein] + nicotinamide. It catalyses the reaction L-lysyl-[protein] + NAD(+) = N(6)-(ADP-D-ribosyl)-L-lysyl-[protein] + nicotinamide + H(+). With respect to regulation, mono-ADP-ribosyltransferase activity of PARP3 is selectively inhibited by ME0328 compound; ME0328 does not inhibit other ARTD/PARP enzymes, such as PARP1. Mono-ADP-ribosyltransferase is strongly inhibited by KU0058948 compound. In terms of biological role, mono-ADP-ribosyltransferase that mediates mono-ADP-ribosylation of target proteins and plays a key role in the response to DNA damage. Mediates mono-ADP-ribosylation of glutamate, aspartate or lysine residues on target proteins. In contrast to PARP1 and PARP2, it is not able to mediate poly-ADP-ribosylation. Involved in DNA repair by mediating mono-ADP-ribosylation of a limited number of acceptor proteins involved in chromatin architecture and in DNA metabolism, such as histone H2B, XRCC5 and XRCC6. ADP-ribosylation follows DNA damage and appears as an obligatory step in a detection/signaling pathway leading to the reparation of DNA strand breaks. Involved in single-strand break repair by catalyzing mono-ADP-ribosylation of histone H2B on 'Glu-2' (H2BE2ADPr) of nucleosomes containing nicked DNA. Cooperates with the XRCC5-XRCC6 (Ku80-Ku70) heterodimer to limit end-resection thereby promoting accurate NHEJ. Suppresses G-quadruplex (G4) structures in response to DNA damage. Associates with a number of DNA repair factors and is involved in the response to exogenous and endogenous DNA strand breaks. Together with APLF, promotes the retention of the LIG4-XRCC4 complex on chromatin and accelerate DNA ligation during non-homologous end-joining (NHEJ). May link the DNA damage surveillance network to the mitotic fidelity checkpoint. Acts as a negative regulator of immunoglobulin class switch recombination, probably by controlling the level of AICDA /AID on the chromatin. In addition to proteins, also able to ADP-ribosylate DNA: mediates DNA mono-ADP-ribosylation of DNA strand break termini via covalent addition of a single ADP-ribose moiety to a 5'- or 3'-terminal phosphate residues in DNA containing multiple strand breaks. The protein is Protein mono-ADP-ribosyltransferase PARP3 of Homo sapiens (Human).